Reading from the N-terminus, the 105-residue chain is Heat shock protein HspQ (105 aa).

The tract at residues 80 to 105 (AHPEQPSLDELAASIRHQLQAPHLRN) is disordered.

Belongs to the HspQ family.

It localises to the cytoplasm. Its function is as follows. Involved in the degradation of certain denaturated proteins, including DnaA, during heat shock stress. The sequence is that of Heat shock protein HspQ from Yersinia pseudotuberculosis serotype O:1b (strain IP 31758).